The chain runs to 310 residues: Isoflavone reductase homolog A622 (310 aa).

NADP(+) contacts are provided by residues 13 to 19 (GGTGYIG), arginine 38, and lysine 47. The active-site Proton acceptor is the lysine 135. Arginine 139 contributes to the NADP(+) binding site.

Belongs to the NmrA-type oxidoreductase family. Isoflavone reductase subfamily. As to quaternary structure, monomer. In terms of tissue distribution, expressed in roots and stems.

It is found in the cytoplasm. It functions in the pathway alkaloid biosynthesis; nicotine biosynthesis. In terms of biological role, NADPH-binding protein. Involved in the biosynthesis of pyridine alkaloid natural products, leading mainly to the production of anabasine, anatabine, nicotine and nornicotine, effective deterrents against herbivores with antiparasitic and pesticide properties (neurotoxins); nornicotine serves as the precursor in the synthesis of the carcinogen compound N'-nitrosonornicotine (NNN). Reductase involved in a late step of tobacco alkaloid biosynthesis. Triggers either the formation of a nicotinic acid-derived precursor or the final condensation reaction of tobacco alkaloids. In Nicotiana sylvestris (Wood tobacco), this protein is Isoflavone reductase homolog A622.